The chain runs to 686 residues: Elongation factor G 2 (686 aa).

In terms of domain architecture, tr-type G spans threonine 7–leucine 280. GTP contacts are provided by residues alanine 16–threonine 23, aspartate 80–histidine 84, and asparagine 134–aspartate 137.

The protein belongs to the TRAFAC class translation factor GTPase superfamily. Classic translation factor GTPase family. EF-G/EF-2 subfamily.

The protein resides in the cytoplasm. Functionally, catalyzes the GTP-dependent ribosomal translocation step during translation elongation. During this step, the ribosome changes from the pre-translocational (PRE) to the post-translocational (POST) state as the newly formed A-site-bound peptidyl-tRNA and P-site-bound deacylated tRNA move to the P and E sites, respectively. Catalyzes the coordinated movement of the two tRNA molecules, the mRNA and conformational changes in the ribosome. The protein is Elongation factor G 2 (fusB) of Streptomyces coelicolor (strain ATCC BAA-471 / A3(2) / M145).